A 189-amino-acid chain; its full sequence is Chitin synthase 2 (189 aa).

Belongs to the chitin synthase family. Class II subfamily.

It is found in the cell membrane. The enzyme catalyses [(1-&gt;4)-N-acetyl-beta-D-glucosaminyl](n) + UDP-N-acetyl-alpha-D-glucosamine = [(1-&gt;4)-N-acetyl-beta-D-glucosaminyl](n+1) + UDP + H(+). Polymerizes chitin, a structural polymer of the cell wall and septum, by transferring the sugar moiety of UDP-GlcNAc to the non-reducing end of the growing chitin polymer. The chain is Chitin synthase 2 (CHS2) from Xylohypha bantiana.